Reading from the N-terminus, the 962-residue chain is Protein lin-36 (962 aa).

Disordered stretches follow at residues 1–53 and 74–99; these read MSEE…ETEG and TSSG…PREE. Residues 23–40 are compositionally biased toward basic and acidic residues; it reads DSHVTVHSVEQDSQHSGE. The span at 74-95 shows a compositional bias: polar residues; it reads TSSGEVLDESQVTPTKQASSSQ. A THAP-type zinc finger spans residues 161-249; sequence LTHKPCTVCN…IEAFGVPVAI (89 aa). Basic and acidic residues-rich tracts occupy residues 452–472 and 534–570; these read KAEE…KHAE and SHEE…DEQF. Disordered stretches follow at residues 452 to 575, 612 to 676, 744 to 788, and 932 to 962; these read KAEE…KMVQ, IAAT…PEER, QEKG…SASS, and DPKW…DSQQ. The segment covering 626–637 has biased composition (low complexity); that stretch reads SSEQTPEPTTSQ. Positions 647-658 are enriched in basic and acidic residues; that stretch reads KTKESAVQKVEK. Over residues 939-951 the composition is skewed to low complexity; it reads QQQQQQQQQQQEQ. Polar residues predominate over residues 952–962; the sequence is FPGQGSSDSQQ.

As to expression, expressed in vulval precursor P(3-8).p cells and their descendants, neurons of the head, tail and ventral cord, hypodermal and intestinal cells and germline cells.

The protein localises to the nucleus. Required to negatively regulate vulval development. Antagonizes Ras-mediated vulval induction. Acts cell autonomously. The sequence is that of Protein lin-36 (lin-36) from Caenorhabditis elegans.